We begin with the raw amino-acid sequence, 308 residues long: 4-hydroxyproline 2-epimerase (308 aa).

Catalysis depends on C88, which acts as the Proton acceptor. Substrate-binding positions include 89–90 (GH), H208, and D232. C236 serves as the catalytic Proton donor. Residue 237 to 238 (GT) coordinates substrate.

This sequence belongs to the proline racemase family.

It carries out the reaction trans-4-hydroxy-L-proline = cis-4-hydroxy-D-proline. Functionally, catalyzes the reversible epimerization of cis-4-hydroxy-D-proline (c4DHyp) to trans-4-hydroxy-L-proline (t4LHyp). May be involved in a degradation pathway that allows P.putida strain KT2440 to grow on either epimer of 4-hydroxyproline, c4DHyp and t4LHyp, as the sole carbon and nitrogen source. Does not exhibit measureable racemase activity in vitro with any of the 19 natural chiral amino acid enantiomers. This is 4-hydroxyproline 2-epimerase from Pseudomonas putida (strain ATCC 47054 / DSM 6125 / CFBP 8728 / NCIMB 11950 / KT2440).